A 116-amino-acid polypeptide reads, in one-letter code: SGSCSLKTCWLQLADFRKVGDLLKEKYDSAAAMRISRKGKLELVNNRFNSPTPEDLVYVDPSPDYCLRNETTGSLGTQGRLCNKTSEGMDGCELMCCGRGYDQFKSVQVERCHCKF.

Ser1 carries O-palmitoleoyl serine; by PORCN lipidation. N-linked (GlcNAc...) asparagine glycosylation is found at Asn69 and Asn83. Cys82 and Cys97 are disulfide-bonded.

The protein belongs to the Wnt family. In terms of processing, palmitoleoylation is required for efficient binding to frizzled receptors. Depalmitoleoylation leads to Wnt signaling pathway inhibition.

The protein resides in the secreted. Its subcellular location is the extracellular space. The protein localises to the extracellular matrix. Functionally, ligand for members of the frizzled family of seven transmembrane receptors. Probable developmental protein. May be a signaling molecule which affects the development of discrete regions of tissues. Is likely to signal over only few cell diameters. This is Protein Wnt-5b (WNT-5B) from Plestiodon skiltonianus (Western skink).